A 194-amino-acid chain; its full sequence is Large ribosomal subunit protein bL27c (194 aa).

A chloroplast-targeting transit peptide spans 1 to 57 (MAVTTSMSFNLMASFRGMSLSSSSSSSFFKGEFGPSSLRLPNKSPLSVSPFPLTIES). The tract at residues 57 to 76 (SAHKKGAGSTKNGRDSKGQR) is disordered.

As to quaternary structure, component of the chloroplast large ribosomal subunit (LSU). Mature 70S chloroplast ribosomes of higher plants consist of a small (30S) and a large (50S) subunit. The 30S small subunit contains 1 molecule of ribosomal RNA (16S rRNA) and 24 different proteins. The 50S large subunit contains 3 rRNA molecules (23S, 5S and 4.5S rRNA) and 33 different proteins.

It is found in the plastid. The protein resides in the chloroplast. In terms of biological role, component of the chloroplast ribosome (chloro-ribosome), a dedicated translation machinery responsible for the synthesis of chloroplast genome-encoded proteins, including proteins of the transcription and translation machinery and components of the photosynthetic apparatus. This is Large ribosomal subunit protein bL27c (RPL27) from Spinacia oleracea (Spinach).